The sequence spans 89 residues: Sec-independent protein translocase protein TatA (89 aa).

A helical membrane pass occupies residues 1–21 (MGGISIWQLLIIAVIVVLLFG). Positions 65–89 (ADKQADTNQEQAKTEDAKRHDKEQV) are disordered. Over residues 76-89 (AKTEDAKRHDKEQV) the composition is skewed to basic and acidic residues.

Belongs to the TatA/E family. The Tat system comprises two distinct complexes: a TatABC complex, containing multiple copies of TatA, TatB and TatC subunits, and a separate TatA complex, containing only TatA subunits. Substrates initially bind to the TatABC complex, which probably triggers association of the separate TatA complex to form the active translocon.

Its subcellular location is the cell inner membrane. In terms of biological role, part of the twin-arginine translocation (Tat) system that transports large folded proteins containing a characteristic twin-arginine motif in their signal peptide across membranes. TatA could form the protein-conducting channel of the Tat system. The polypeptide is Sec-independent protein translocase protein TatA (Shigella flexneri).